A 77-amino-acid polypeptide reads, in one-letter code: Secapin (77 aa).

Positions 1–32 are cleaved as a signal peptide; the sequence is MKNYSKNATHLITVLLFSFVVILLIIPSKCEA. The propeptide occupies 33–52; sequence VSNDMQPLEARSADLIPEPR. Cys61 and Cys72 are joined by a disulfide.

This sequence belongs to the secapin family. As to expression, expressed by the venom gland.

The protein resides in the secreted. Functionally, nontoxic peptide. The protein is Secapin of Vespa velutina nigrithorax (Hornet).